Here is a 383-residue protein sequence, read N- to C-terminus: 8-amino-7-oxononanoate synthase (383 aa).

Residues R27 and R34 each contribute to the substrate site. A pyridoxal 5'-phosphate-binding site is contributed by 114 to 115; that stretch reads GY. H139 is a binding site for substrate. Pyridoxal 5'-phosphate-binding positions include S187, 212-215, and 232-235; these read DDAH and TLSK. Position 235 is an N6-(pyridoxal phosphate)lysine (K235). T344 serves as a coordination point for substrate.

The protein belongs to the class-II pyridoxal-phosphate-dependent aminotransferase family. BioF subfamily. In terms of assembly, homodimer. Requires pyridoxal 5'-phosphate as cofactor.

The enzyme catalyses 6-carboxyhexanoyl-[ACP] + L-alanine + H(+) = (8S)-8-amino-7-oxononanoate + holo-[ACP] + CO2. It functions in the pathway cofactor biosynthesis; biotin biosynthesis. In terms of biological role, catalyzes the decarboxylative condensation of pimeloyl-[acyl-carrier protein] and L-alanine to produce 8-amino-7-oxononanoate (AON), [acyl-carrier protein], and carbon dioxide. This Methylorubrum extorquens (strain CM4 / NCIMB 13688) (Methylobacterium extorquens) protein is 8-amino-7-oxononanoate synthase.